Here is an 86-residue protein sequence, read N- to C-terminus: Exodeoxyribonuclease 7 small subunit (86 aa).

The tract at residues 67–86 is disordered; that stretch reads RVSPASGGATEAPAPAERDR.

The protein belongs to the XseB family. As to quaternary structure, heterooligomer composed of large and small subunits.

Its subcellular location is the cytoplasm. It catalyses the reaction Exonucleolytic cleavage in either 5'- to 3'- or 3'- to 5'-direction to yield nucleoside 5'-phosphates.. Functionally, bidirectionally degrades single-stranded DNA into large acid-insoluble oligonucleotides, which are then degraded further into small acid-soluble oligonucleotides. This Beutenbergia cavernae (strain ATCC BAA-8 / DSM 12333 / CCUG 43141 / JCM 11478 / NBRC 16432 / NCIMB 13614 / HKI 0122) protein is Exodeoxyribonuclease 7 small subunit.